Here is a 178-residue protein sequence, read N- to C-terminus: Ribulose bisphosphate carboxylase small subunit, chloroplastic (178 aa).

A chloroplast-targeting transit peptide spans 1-54 (MASISSSVATVSRTAPAQANMVAPFTGLKSNAAFPTTKKANDFSTLPSNGGRVQ).

It belongs to the RuBisCO small chain family. In terms of assembly, heterohexadecamer of 8 large and 8 small subunits.

Its subcellular location is the plastid. It is found in the chloroplast. In terms of biological role, ruBisCO catalyzes two reactions: the carboxylation of D-ribulose 1,5-bisphosphate, the primary event in carbon dioxide fixation, as well as the oxidative fragmentation of the pentose substrate. Both reactions occur simultaneously and in competition at the same active site. Although the small subunit is not catalytic it is essential for maximal activity. The protein is Ribulose bisphosphate carboxylase small subunit, chloroplastic of Helianthus annuus (Common sunflower).